Consider the following 301-residue polypeptide: Putative dynamin-related protein 4A (301 aa).

One can recognise a Dynamin-type G domain in the interval 59–301; that stretch reads GIQLPTIVVV…LIDGDIVGIL (243 aa). The tract at residues 69-76 is G1 motif; it reads GDQSSGKS. Position 69–76 (69–76) interacts with GTP; sequence GDQSSGKS. The G2 motif stretch occupies residues 94-96; that stretch reads CTR. Residues 168-171 are G3 motif; sequence DLPG. GTP is bound by residues 168-172 and 237-240; these read DLPGI and TKAD. Residues 237–240 form a G4 motif region; that stretch reads TKAD. Position 270 (E270) is a region of interest, G5 motif.

The protein belongs to the TRAFAC class dynamin-like GTPase superfamily. Dynamin/Fzo/YdjA family.

This Arabidopsis thaliana (Mouse-ear cress) protein is Putative dynamin-related protein 4A (DRP4A).